A 545-amino-acid chain; its full sequence is Chaperonin GroEL (545 aa).

Residues 29–32 (TLGP), lysine 50, 86–90 (DGTTT), glycine 413, and aspartate 495 contribute to the ATP site.

It belongs to the chaperonin (HSP60) family. In terms of assembly, forms a cylinder of 14 subunits composed of two heptameric rings stacked back-to-back. Interacts with the co-chaperonin GroES.

The protein localises to the cytoplasm. The catalysed reaction is ATP + H2O + a folded polypeptide = ADP + phosphate + an unfolded polypeptide.. In terms of biological role, together with its co-chaperonin GroES, plays an essential role in assisting protein folding. The GroEL-GroES system forms a nano-cage that allows encapsulation of the non-native substrate proteins and provides a physical environment optimized to promote and accelerate protein folding. The chain is Chaperonin GroEL from Borrelia garinii subsp. bavariensis (strain ATCC BAA-2496 / DSM 23469 / PBi) (Borreliella bavariensis).